A 392-amino-acid polypeptide reads, in one-letter code: Xylose operon regulatory protein (392 aa).

Positions 288–386 constitute an HTH araC/xylS-type domain; the sequence is IQAMHYIRNH…DTTPKEYRDV (99 aa). 2 consecutive DNA-binding regions (H-T-H motif) follow at residues 305–326 and 353–376; these read DQVL…KEEV and INEI…KKAY.

In terms of biological role, regulatory protein for the xylBAFGHR operon. In Escherichia coli O157:H7, this protein is Xylose operon regulatory protein (xylR).